Consider the following 890-residue polypeptide: Translation initiation factor IF-2 (890 aa).

Residues 45 to 302 (LIDHLNQKNS…SSLQQGFQKP (258 aa)) are disordered. Polar residues predominate over residues 67 to 81 (STLNIPSTGGKSKSV). The segment covering 92–217 (VKRDPQEAER…RMAEENKWTD (126 aa)) has biased composition (basic and acidic residues). Over residues 252–266 (GRGRNAKAARPKKGN) the composition is skewed to basic residues. The span at 267-280 (KHAESKADREEARA) shows a compositional bias: basic and acidic residues. The tr-type G domain occupies 389-558 (PRAPVVTIMG…LLQAEVLELK (170 aa)). The tract at residues 398–405 (GHVDHGKT) is G1. 398-405 (GHVDHGKT) is a GTP binding site. Positions 423-427 (GITQH) are G2. The G3 stretch occupies residues 444–447 (DTPG). GTP is bound by residues 444-448 (DTPGH) and 498-501 (NKID). A G4 region spans residues 498-501 (NKID). Positions 534-536 (SAK) are G5. Position 808 is an N6-acetyllysine (Lys-808).

This sequence belongs to the TRAFAC class translation factor GTPase superfamily. Classic translation factor GTPase family. IF-2 subfamily.

Its subcellular location is the cytoplasm. One of the essential components for the initiation of protein synthesis. Protects formylmethionyl-tRNA from spontaneous hydrolysis and promotes its binding to the 30S ribosomal subunits. Also involved in the hydrolysis of GTP during the formation of the 70S ribosomal complex. The protein is Translation initiation factor IF-2 of Shigella dysenteriae serotype 1 (strain Sd197).